The sequence spans 289 residues: Shikimate dehydrogenase (NADP(+)) (289 aa).

Residues 19–21 (SMS) and Thr66 contribute to the shikimate site. The Proton acceptor role is filled by Lys70. 2 residues coordinate shikimate: Asn91 and Asp106. NADP(+)-binding positions include 131–135 (GAGGA), 155–160 (NRTLKK), and Leu229. Tyr231 contributes to the shikimate binding site. Gly252 is a binding site for NADP(+).

The protein belongs to the shikimate dehydrogenase family. Homodimer.

It catalyses the reaction shikimate + NADP(+) = 3-dehydroshikimate + NADPH + H(+). It functions in the pathway metabolic intermediate biosynthesis; chorismate biosynthesis; chorismate from D-erythrose 4-phosphate and phosphoenolpyruvate: step 4/7. Involved in the biosynthesis of the chorismate, which leads to the biosynthesis of aromatic amino acids. Catalyzes the reversible NADPH linked reduction of 3-dehydroshikimate (DHSA) to yield shikimate (SA). The chain is Shikimate dehydrogenase (NADP(+)) from Halothermothrix orenii (strain H 168 / OCM 544 / DSM 9562).